The primary structure comprises 248 residues: CKLF-like MARVEL transmembrane domain-containing protein 2 (248 aa).

Residues 1–63 are disordered; it reads MAPKAAKGAK…KAVQPKHEVG (63 aa). Over residues 12-22 the composition is skewed to pro residues; sequence EPAPAPPPPGA. The span at 23-63 shows a compositional bias: basic and acidic residues; sequence KPEEDKKDGKEPSDKPQKAVQDHKEPSDKPQKAVQPKHEVG. The region spanning 82–204 is the MARVEL domain; the sequence is FWLLGHAEIK…DVCLQRNHFR (123 aa). 3 consecutive transmembrane segments (helical) span residues 116 to 136, 147 to 167, and 178 to 198; these read LIIT…SFAI, ISDL…VVFA, and YLLA…DVCL. The tract at residues 208–248 is disordered; the sequence is AKKHMLVPPPGKEKGPQQGKGPEPAKPPEPGKPPGPAKGKK. The span at 231–248 shows a compositional bias: pro residues; sequence PAKPPEPGKPPGPAKGKK.

This sequence belongs to the chemokine-like factor family. Highly expressed in testis.

Its subcellular location is the membrane. The protein is CKLF-like MARVEL transmembrane domain-containing protein 2 (CMTM2) of Homo sapiens (Human).